We begin with the raw amino-acid sequence, 353 residues long: uncharacterized protein (353 aa).

Positions 1–24 (MRVVKRIAVACYLGITIFSGIAFG) are cleaved as a signal peptide.

This sequence belongs to the chlamydial CPn_1058/CT_355/TC_0634 family.

This is an uncharacterized protein from Chlamydia muridarum (strain MoPn / Nigg).